Reading from the N-terminus, the 367-residue chain is Phosphoribosylaminoimidazole-succinocarboxamide synthase (367 aa).

The protein belongs to the SAICAR synthetase family.

It carries out the reaction 5-amino-1-(5-phospho-D-ribosyl)imidazole-4-carboxylate + L-aspartate + ATP = (2S)-2-[5-amino-1-(5-phospho-beta-D-ribosyl)imidazole-4-carboxamido]succinate + ADP + phosphate + 2 H(+). The protein operates within purine metabolism; IMP biosynthesis via de novo pathway; 5-amino-1-(5-phospho-D-ribosyl)imidazole-4-carboxamide from 5-amino-1-(5-phospho-D-ribosyl)imidazole-4-carboxylate: step 1/2. The sequence is that of Phosphoribosylaminoimidazole-succinocarboxamide synthase from Shewanella frigidimarina (strain NCIMB 400).